A 560-amino-acid polypeptide reads, in one-letter code: Membrane protein insertase YidC (560 aa).

The chain crosses the membrane as a helical span at residues 7 to 27 (ILIVALAIVSYVMVLKWNQDY). A compositionally biased stretch (polar residues) spans 38 to 56 (ASSTTTSGLPDTATGNNAA). The tract at residues 38–76 (ASSTTTSGLPDTATGNNAAASDDIPRAASDTSAPAETPV) is disordered. 4 helical membrane-spanning segments follow: residues 367 to 387 (IVGNWGWSIIFLTMLIKGIFF), 437 to 457 (LGGCLPILVQMPVFLSLYWVL), 468 to 488 (FMLWITDLSIKDPFFILPIIM), and 515 to 535 (PIIFTFFFLWFPAGLVLYWVV).

It belongs to the OXA1/ALB3/YidC family. Type 1 subfamily. In terms of assembly, interacts with the Sec translocase complex via SecD. Specifically interacts with transmembrane segments of nascent integral membrane proteins during membrane integration.

The protein localises to the cell inner membrane. In terms of biological role, required for the insertion and/or proper folding and/or complex formation of integral membrane proteins into the membrane. Involved in integration of membrane proteins that insert both dependently and independently of the Sec translocase complex, as well as at least some lipoproteins. Aids folding of multispanning membrane proteins. The chain is Membrane protein insertase YidC from Pseudomonas fluorescens (strain Pf0-1).